A 118-amino-acid polypeptide reads, in one-letter code: Small ribosomal subunit protein uS12cz/uS12cy (118 aa).

Belongs to the universal ribosomal protein uS12 family. Part of the 30S ribosomal subunit.

Its subcellular location is the plastid. The protein localises to the chloroplast. In terms of biological role, with S4 and S5 plays an important role in translational accuracy. Located at the interface of the 30S and 50S subunits. In Helianthus annuus (Common sunflower), this protein is Small ribosomal subunit protein uS12cz/uS12cy (rps12-A).